We begin with the raw amino-acid sequence, 179 residues long: NADH dehydrogenase [ubiquinone] 1 beta subcomplex subunit 9 (179 aa).

Ala2 bears the N-acetylalanine mark. A Phosphoserine modification is found at Ser85. The tract at residues 136-162 (EVKQLQEETPPGGPLTEALPPARKEGD) is disordered.

Belongs to the complex I LYR family. In terms of assembly, mammalian complex I is composed of 45 different subunits.

The protein localises to the mitochondrion inner membrane. Its function is as follows. Accessory subunit of the mitochondrial membrane respiratory chain NADH dehydrogenase (Complex I), that is believed to be not involved in catalysis. Complex I functions in the transfer of electrons from NADH to the respiratory chain. The immediate electron acceptor for the enzyme is believed to be ubiquinone. This Homo sapiens (Human) protein is NADH dehydrogenase [ubiquinone] 1 beta subcomplex subunit 9 (NDUFB9).